A 129-amino-acid polypeptide reads, in one-letter code: Large ribosomal subunit protein bL17 (129 aa).

It belongs to the bacterial ribosomal protein bL17 family. Part of the 50S ribosomal subunit. Contacts protein L32.

The protein is Large ribosomal subunit protein bL17 of Polynucleobacter asymbioticus (strain DSM 18221 / CIP 109841 / QLW-P1DMWA-1) (Polynucleobacter necessarius subsp. asymbioticus).